We begin with the raw amino-acid sequence, 382 residues long: Kelch domain-containing protein 3 (382 aa).

5 Kelch repeats span residues 25–77, 88–138, 139–189, 191–249, and 251–301; these read RVYS…PYMR, TVLL…VLGK, IMYI…TMLG, HMYV…GYNG, and LYIF…IVGD.

As to quaternary structure, component of a CRL2(KLHDC3) complex, also named ECS(KLHDC3) complex, composed of CUL2, Elongin BC (ELOB and ELOC), RBX1 and substrate-specific adapter KLHDC3. May form oligomers as a KLHDC3-ELOB-ELOC complex; this interaction is likely autoinhibitory for the E3 ligase complex.

The protein resides in the cytoplasm. It functions in the pathway protein modification; protein ubiquitination. In terms of biological role, substrate-recognition component of a Cul2-RING (CRL2) E3 ubiquitin-protein ligase complex of the DesCEND (destruction via C-end degrons) pathway, which recognizes a C-degron located at the extreme C terminus of target proteins, leading to their ubiquitination and degradation. The C-degron recognized by the DesCEND pathway is usually a motif of less than ten residues and can be present in full-length proteins, truncated proteins or proteolytically cleaved forms. The CRL2(KLHDC3) complex specifically recognizes proteins with a glycine (Gly) at the C-terminus, leading to their ubiquitination and degradation: recognizes the C-terminal -Arg-(Xaa)n-Arg-Gly, -Arg-(Xaa)n-Lys-Gly, and -Arg-(Xaa)n-Gln-Gly degrons. The CRL2(KLHDC3) complex mediates ubiquitination and degradation of truncated SELENOV and SEPHS2 selenoproteins produced by failed UGA/Sec decoding, which end with a glycine. May be involved in meiotic recombination process. This Homo sapiens (Human) protein is Kelch domain-containing protein 3.